The following is a 65-amino-acid chain: Large ribosomal subunit protein uL29 (65 aa).

The protein belongs to the universal ribosomal protein uL29 family.

The sequence is that of Large ribosomal subunit protein uL29 from Brevibacillus brevis (strain 47 / JCM 6285 / NBRC 100599).